Reading from the N-terminus, the 374-residue chain is Putative F-box protein At5g60060 (374 aa).

The region spanning 9-61 is the F-box domain; the sequence is SQWSDLPLDILELISDRLDHDSSDTIHLLCLRSVCATWRLSLPLSNKNNRLSK.

The polypeptide is Putative F-box protein At5g60060 (Arabidopsis thaliana (Mouse-ear cress)).